The following is a 607-amino-acid chain: Chaperone protein DnaK (607 aa).

Threonine 173 bears the Phosphothreonine; by autocatalysis mark. Composition is skewed to basic and acidic residues over residues 490 to 509 and 524 to 542; these read EQNAEEDKKRREESDLRNEA and GDNVSEDDKKQAEDKKEAL. Disordered stretches follow at residues 490 to 510, 524 to 555, and 574 to 607; these read EQNAEEDKKRREESDLRNEAD, GDNVSEDDKKQAEDKKEALKSALEGQDLEDIK, and QQAQQGDAAGSNQSDVEDAEYTEVKDDDDKKDNK. Residues 574–587 show a composition bias toward polar residues; the sequence is QQAQQGDAAGSNQS. Residues 595–607 show a composition bias toward basic and acidic residues; sequence TEVKDDDDKKDNK.

It belongs to the heat shock protein 70 family.

Functionally, acts as a chaperone. This chain is Chaperone protein DnaK, found in Staphylococcus carnosus (strain TM300).